The chain runs to 175 residues: Macro domain-containing protein TTE0995 (175 aa).

The region spanning 1 to 174 is the Macro domain; it reads MKEKIKLIKG…VYSKAYEELD (174 aa).

It belongs to the MacroD-type family.

This chain is Macro domain-containing protein TTE0995, found in Caldanaerobacter subterraneus subsp. tengcongensis (strain DSM 15242 / JCM 11007 / NBRC 100824 / MB4) (Thermoanaerobacter tengcongensis).